Reading from the N-terminus, the 241-residue chain is MADS-box transcription factor 57 (241 aa).

Residues 1-61 (MGRGKIVIRR…GRLYEFSSTN (61 aa)) enclose the MADS-box domain. The 94-residue stretch at 85–178 (IKIWQREAAS…LNVMSQQKLE (94 aa)) folds into the K-box domain. Residues 216-241 (LELSQSQQREGECSKTAAPELGLHLP) are disordered.

Interacts with TB1. Expressed in seedling roots and shoots. Highly expressed in young leaves.

It is found in the nucleus. Functionally, transcriptional factor that targets the CArG motif 5'-C(A/T)TTAAAAAG-3' in the promoter of D14. Directly suppresses D14 expression to control the outgrowth of axillary buds. This is MADS-box transcription factor 57 from Oryza sativa subsp. japonica (Rice).